A 1357-amino-acid polypeptide reads, in one-letter code: DNA-directed RNA polymerase subunit beta (1357 aa).

The protein belongs to the RNA polymerase beta chain family. The RNAP catalytic core consists of 2 alpha, 1 beta, 1 beta' and 1 omega subunit. When a sigma factor is associated with the core the holoenzyme is formed, which can initiate transcription.

The enzyme catalyses RNA(n) + a ribonucleoside 5'-triphosphate = RNA(n+1) + diphosphate. In terms of biological role, DNA-dependent RNA polymerase catalyzes the transcription of DNA into RNA using the four ribonucleoside triphosphates as substrates. The chain is DNA-directed RNA polymerase subunit beta from Pseudomonas fluorescens (strain SBW25).